The primary structure comprises 206 residues: Ribosomal RNA large subunit methyltransferase E (206 aa).

S-adenosyl-L-methionine-binding residues include Gly-60, Trp-62, Asp-80, Asp-96, and Asp-121. The active-site Proton acceptor is the Lys-161.

This sequence belongs to the class I-like SAM-binding methyltransferase superfamily. RNA methyltransferase RlmE family.

Its subcellular location is the cytoplasm. The enzyme catalyses uridine(2552) in 23S rRNA + S-adenosyl-L-methionine = 2'-O-methyluridine(2552) in 23S rRNA + S-adenosyl-L-homocysteine + H(+). In terms of biological role, specifically methylates the uridine in position 2552 of 23S rRNA at the 2'-O position of the ribose in the fully assembled 50S ribosomal subunit. The sequence is that of Ribosomal RNA large subunit methyltransferase E from Francisella tularensis subsp. tularensis (strain FSC 198).